The primary structure comprises 1220 residues: DNA-directed RNA polymerase subunit beta (1220 aa).

It belongs to the RNA polymerase beta chain family. As to quaternary structure, the RNAP catalytic core consists of 2 alpha, 1 beta, 1 beta' and 1 omega subunit. When a sigma factor is associated with the core the holoenzyme is formed, which can initiate transcription.

It carries out the reaction RNA(n) + a ribonucleoside 5'-triphosphate = RNA(n+1) + diphosphate. In terms of biological role, DNA-dependent RNA polymerase catalyzes the transcription of DNA into RNA using the four ribonucleoside triphosphates as substrates. This is DNA-directed RNA polymerase subunit beta from Mesomycoplasma hyopneumoniae (strain J / ATCC 25934 / NCTC 10110) (Mycoplasma hyopneumoniae).